Consider the following 240-residue polypeptide: MGRRIQGQRRGRGTSTFRAPSHRYKAELSHKRTEDTDVLAGEVIDVEHDPARSAPVARVAFEDDDQRLVLASEGVGVGDTIEIGISATIEEGNTLPLAEIPEGVPVCNVESHPGDGGKFARAGGVNADLVTHERDATIVELPSGETKRLSPDCRATIGVVAGGGRTEKPFVKAGNKHHKMKARGTKWPRVRGVAMNAVDHPFGGGGRQHPGRPKSVSRDAAPGRKVGDIASKRTGRGGNE.

The interval 199–240 is disordered; the sequence is DHPFGGGGRQHPGRPKSVSRDAAPGRKVGDIASKRTGRGGNE. Residues 221 to 231 show a composition bias toward basic and acidic residues; it reads APGRKVGDIAS.

Belongs to the universal ribosomal protein uL2 family. As to quaternary structure, part of the 50S ribosomal subunit. Forms a bridge to the 30S subunit in the 70S ribosome.

Functionally, one of the primary rRNA binding proteins. Required for association of the 30S and 50S subunits to form the 70S ribosome, for tRNA binding and peptide bond formation. It has been suggested to have peptidyltransferase activity; this is somewhat controversial. Makes several contacts with the 16S rRNA in the 70S ribosome. The polypeptide is Large ribosomal subunit protein uL2 (Halobacterium salinarum (strain ATCC 29341 / DSM 671 / R1)).